The sequence spans 268 residues: Tropinone reductase homolog At2g29150 (268 aa).

22–46 serves as a coordination point for NADP(+); the sequence is LVTGGSKGLGEAVVEELAMLGARVH. S155 is a binding site for substrate. Y167 functions as the Proton acceptor in the catalytic mechanism.

It belongs to the short-chain dehydrogenases/reductases (SDR) family. SDR65C subfamily.

Functionally, enantiospecific reductase active on cyclic monoterpenes and small flexible lipophilic carbonyls. No activity with tropinone, nitrogen-containing tropinone analogs, tropine or pseudotropine as substrate. In Arabidopsis thaliana (Mouse-ear cress), this protein is Tropinone reductase homolog At2g29150.